The following is a 268-amino-acid chain: Undecaprenyl-diphosphatase (268 aa).

Transmembrane regions (helical) follow at residues 43 to 63 (FWNTFTVLIQLGAILAIVVIY), 83 to 103 (FVIGVLAAFLPAVVVGLIAGK), 109 to 129 (LFNPWVVCFSLIVGGAVLMWV), 144 to 164 (FPLPMYIWIGIAQCLAMIPGV), 184 to 204 (AAEFSFFLAIPTMIGAFAYDF), 218 to 238 (IVAIGFVVSFVTAIVVVKAFL), and 246 to 266 (FTFFAWWRVIVGTLGLIALAL).

Belongs to the UppP family.

Its subcellular location is the cell inner membrane. The catalysed reaction is di-trans,octa-cis-undecaprenyl diphosphate + H2O = di-trans,octa-cis-undecaprenyl phosphate + phosphate + H(+). In terms of biological role, catalyzes the dephosphorylation of undecaprenyl diphosphate (UPP). Confers resistance to bacitracin. This chain is Undecaprenyl-diphosphatase, found in Nitrobacter hamburgensis (strain DSM 10229 / NCIMB 13809 / X14).